The chain runs to 326 residues: Beta-ketoacyl-[acyl-carrier-protein] synthase III (326 aa).

Active-site residues include C112 and H251. Residues 252–256 (QANSR) are ACP-binding. The active site involves N281.

Belongs to the thiolase-like superfamily. FabH family. In terms of assembly, homodimer.

Its subcellular location is the cytoplasm. The enzyme catalyses malonyl-[ACP] + acetyl-CoA + H(+) = 3-oxobutanoyl-[ACP] + CO2 + CoA. Its pathway is lipid metabolism; fatty acid biosynthesis. Catalyzes the condensation reaction of fatty acid synthesis by the addition to an acyl acceptor of two carbons from malonyl-ACP. Catalyzes the first condensation reaction which initiates fatty acid synthesis and may therefore play a role in governing the total rate of fatty acid production. Possesses both acetoacetyl-ACP synthase and acetyl transacylase activities. Its substrate specificity determines the biosynthesis of branched-chain and/or straight-chain of fatty acids. This chain is Beta-ketoacyl-[acyl-carrier-protein] synthase III, found in Clostridium botulinum (strain Okra / Type B1).